Reading from the N-terminus, the 278-residue chain is Bifunctional protein FolD (278 aa).

NADP(+)-binding positions include 165-167 and serine 190; that span reads GRS.

The protein belongs to the tetrahydrofolate dehydrogenase/cyclohydrolase family. As to quaternary structure, homodimer.

The enzyme catalyses (6R)-5,10-methylene-5,6,7,8-tetrahydrofolate + NADP(+) = (6R)-5,10-methenyltetrahydrofolate + NADPH. The catalysed reaction is (6R)-5,10-methenyltetrahydrofolate + H2O = (6R)-10-formyltetrahydrofolate + H(+). The protein operates within one-carbon metabolism; tetrahydrofolate interconversion. Catalyzes the oxidation of 5,10-methylenetetrahydrofolate to 5,10-methenyltetrahydrofolate and then the hydrolysis of 5,10-methenyltetrahydrofolate to 10-formyltetrahydrofolate. The polypeptide is Bifunctional protein FolD (Clostridium tetani (strain Massachusetts / E88)).